The following is a 456-amino-acid chain: Bifunctional protein GlmU (456 aa).

The segment at 1–228 is pyrophosphorylase; sequence MKLKAIILAA…YEDIMAVNSR (228 aa). UDP-N-acetyl-alpha-D-glucosamine contacts are provided by residues 8 to 11, Lys-22, Gln-72, 77 to 78, 99 to 101, Gly-138, Glu-153, Asn-168, and Asn-226; these read LAAG, GT, and YGD. Mg(2+) is bound at residue Asp-101. Position 226 (Asn-226) interacts with Mg(2+). The segment at 229–249 is linker; sequence EQLAEVEEVMQRRIVKKHMEA. The tract at residues 250-456 is N-acetyltransferase; the sequence is GVTFIDPQST…WVARKGVGKK (207 aa). 2 residues coordinate UDP-N-acetyl-alpha-D-glucosamine: Arg-331 and Lys-349. The Proton acceptor role is filled by His-361. Residues Tyr-364 and Asn-375 each contribute to the UDP-N-acetyl-alpha-D-glucosamine site. Acetyl-CoA contacts are provided by residues 384 to 385, Ser-403, Ser-421, and Arg-438; that span reads NY.

This sequence in the N-terminal section; belongs to the N-acetylglucosamine-1-phosphate uridyltransferase family. In the C-terminal section; belongs to the transferase hexapeptide repeat family. As to quaternary structure, homotrimer. The cofactor is Mg(2+).

The protein resides in the cytoplasm. The catalysed reaction is alpha-D-glucosamine 1-phosphate + acetyl-CoA = N-acetyl-alpha-D-glucosamine 1-phosphate + CoA + H(+). The enzyme catalyses N-acetyl-alpha-D-glucosamine 1-phosphate + UTP + H(+) = UDP-N-acetyl-alpha-D-glucosamine + diphosphate. It functions in the pathway nucleotide-sugar biosynthesis; UDP-N-acetyl-alpha-D-glucosamine biosynthesis; N-acetyl-alpha-D-glucosamine 1-phosphate from alpha-D-glucosamine 6-phosphate (route II): step 2/2. Its pathway is nucleotide-sugar biosynthesis; UDP-N-acetyl-alpha-D-glucosamine biosynthesis; UDP-N-acetyl-alpha-D-glucosamine from N-acetyl-alpha-D-glucosamine 1-phosphate: step 1/1. The protein operates within bacterial outer membrane biogenesis; LPS lipid A biosynthesis. Catalyzes the last two sequential reactions in the de novo biosynthetic pathway for UDP-N-acetylglucosamine (UDP-GlcNAc). The C-terminal domain catalyzes the transfer of acetyl group from acetyl coenzyme A to glucosamine-1-phosphate (GlcN-1-P) to produce N-acetylglucosamine-1-phosphate (GlcNAc-1-P), which is converted into UDP-GlcNAc by the transfer of uridine 5-monophosphate (from uridine 5-triphosphate), a reaction catalyzed by the N-terminal domain. The chain is Bifunctional protein GlmU from Alkaliphilus metalliredigens (strain QYMF).